The primary structure comprises 425 residues: MHKILVRSNHKPLIGKIKINGSKNAVLPIMAASLFSNSSITLHNVPDLIDVHLMSELLKSLGAEVNFICNKDYKANHTLEIDCSNINNHLISHEIASRLRASFLMLGPMLSRFGRVSTVFPGGCNIGKRPVDIHIKALEAMGAKIEIDSCNITATTKGKLQGKEITFEKVSVGATENIIMSATLAEGVTTINNAATEPEVLDLIEFLKIMGANIEVNNTKITIEGVEALNGCEHKIIPDRIEAGTYALAAIITDGELKLEGVSLSDIECIANELKTIGARVELHDDGIIISRKNGSIKSAHVATNPYPNFPSDMQPQLMSAMSIAGGISIIEENVFESRFAHANELRKLGANISIEKNKATISGIKSLSGANLHANDLRSTAALILASLVAKGETTINNSHHLWRGYEAMHEKLNSCGADIFVSS.

Residue 23 to 24 (KN) participates in phosphoenolpyruvate binding. Arginine 100 provides a ligand contact to UDP-N-acetyl-alpha-D-glucosamine. Cysteine 124 functions as the Proton donor in the catalytic mechanism. Cysteine 124 is modified (2-(S-cysteinyl)pyruvic acid O-phosphothioketal). Residues 169–172 (KVSV), aspartate 313, and valine 335 contribute to the UDP-N-acetyl-alpha-D-glucosamine site.

This sequence belongs to the EPSP synthase family. MurA subfamily.

It localises to the cytoplasm. It catalyses the reaction phosphoenolpyruvate + UDP-N-acetyl-alpha-D-glucosamine = UDP-N-acetyl-3-O-(1-carboxyvinyl)-alpha-D-glucosamine + phosphate. It participates in cell wall biogenesis; peptidoglycan biosynthesis. Its function is as follows. Cell wall formation. Adds enolpyruvyl to UDP-N-acetylglucosamine. This is UDP-N-acetylglucosamine 1-carboxyvinyltransferase from Wolbachia pipientis subsp. Culex pipiens (strain wPip).